The primary structure comprises 394 residues: Keratin, type I cuticular Ha4 (394 aa).

The head stretch occupies residues 1–56; sequence MSYSCCLPSLGCRTSCSSRPCVPPSCHGYTLPGACNIPANVSNCNWFCEGSFNGSE. One can recognise an IF rod domain in the interval 56 to 367; the sequence is EKETMQFLND…SLLESEDCKL (312 aa). The tract at residues 57-91 is coil 1A; it reads KETMQFLNDRLASYLEKVRQLERDNAELEKLIQER. The linker 1 stretch occupies residues 92-102; sequence SQQQEPLLCPS. A coil 1B region spans residues 103–203; the sequence is YQSYFKTIEE…HEEEVNTLRS (101 aa). Residues 204 to 219 form a linker 12 region; it reads QLGDRLNVEVDTAPTV. The interval 220 to 363 is coil 2; the sequence is DLNQVLNETR…NTYRSLLESE (144 aa). Residues 364 to 394 form a tail region; the sequence is DCKLPCNPCATTNASGNSCGPCGTSQKGCCN.

It belongs to the intermediate filament family. In terms of tissue distribution, expressed in the hair follicles.

The protein is Keratin, type I cuticular Ha4 (KRT34) of Homo sapiens (Human).